The primary structure comprises 140 residues: Nucleoside diphosphate kinase (140 aa).

Lysine 11, phenylalanine 59, arginine 87, threonine 93, arginine 104, and asparagine 114 together coordinate ATP. The active-site Pros-phosphohistidine intermediate is the histidine 117.

This sequence belongs to the NDK family. Homotetramer. Mg(2+) serves as cofactor.

Its subcellular location is the cytoplasm. The catalysed reaction is a 2'-deoxyribonucleoside 5'-diphosphate + ATP = a 2'-deoxyribonucleoside 5'-triphosphate + ADP. It catalyses the reaction a ribonucleoside 5'-diphosphate + ATP = a ribonucleoside 5'-triphosphate + ADP. Functionally, major role in the synthesis of nucleoside triphosphates other than ATP. The ATP gamma phosphate is transferred to the NDP beta phosphate via a ping-pong mechanism, using a phosphorylated active-site intermediate. The chain is Nucleoside diphosphate kinase from Rhodopseudomonas palustris (strain HaA2).